Consider the following 473-residue polypeptide: 3-isopropylmalate dehydratase large subunit (473 aa).

3 residues coordinate [4Fe-4S] cluster: C349, C409, and C412.

It belongs to the aconitase/IPM isomerase family. LeuC type 1 subfamily. As to quaternary structure, heterodimer of LeuC and LeuD. The cofactor is [4Fe-4S] cluster.

The enzyme catalyses (2R,3S)-3-isopropylmalate = (2S)-2-isopropylmalate. The protein operates within amino-acid biosynthesis; L-leucine biosynthesis; L-leucine from 3-methyl-2-oxobutanoate: step 2/4. Functionally, catalyzes the isomerization between 2-isopropylmalate and 3-isopropylmalate, via the formation of 2-isopropylmaleate. This Gloeobacter violaceus (strain ATCC 29082 / PCC 7421) protein is 3-isopropylmalate dehydratase large subunit.